Here is a 425-residue protein sequence, read N- to C-terminus: Histone-binding protein RBBP7 (425 aa).

WD repeat units lie at residues 47–122 (QWLP…KINH), 128–173 (RARY…LRLR), 181–217 (GLSW…KVVD), 228–269 (VVED…HSVD), 275–312 (VNCL…LHSF), 318–369 (EIFQ…LFIH), and 376–403 (ISDF…IWQM).

It belongs to the WD repeat RBAP46/RBAP48/MSI1 family. As to quaternary structure, binds directly to helix 1 of the histone fold of histone H4, a region that is not accessible when H4 is in chromatin.

Its subcellular location is the nucleus. Its function is as follows. Core histone-binding subunit that may target chromatin remodeling factors, histone acetyltransferases and histone deacetylases to their histone substrates in a manner that is regulated by nucleosomal DNA. Component of several complexes which regulate chromatin metabolism. The sequence is that of Histone-binding protein RBBP7 (rbbp7) from Xenopus tropicalis (Western clawed frog).